Reading from the N-terminus, the 152-residue chain is MGKRVQLVLNEDVRKLGYSGDLVEVAPGYARNYLIPKGIAYRATPGVLKQIEHRKAEELKRLEGIKDEAAKQKVALQTIGTFRIEQKAGEEDMLFGRVTSPDVAELIANISGFEIDKRGIDIPDIRKLGTYSVDIKLHPEVIATVKVEVVPE.

This sequence belongs to the bacterial ribosomal protein bL9 family.

Functionally, binds to the 23S rRNA. The sequence is that of Large ribosomal subunit protein bL9 from Acaryochloris marina (strain MBIC 11017).